A 359-amino-acid polypeptide reads, in one-letter code: Caffeic acid 3-O-methyltransferase (359 aa).

126–132 contacts substrate; the sequence is MNQDKVL. The segment at 158–176 is substrate binding; sequence AFEYHGTDPRFNKVFNRGM. S-adenosyl-L-methionine contacts are provided by Gly204, Asp227, Asp247, Met248, and Lys261. His265 functions as the Proton acceptor in the catalytic mechanism.

The protein belongs to the class I-like SAM-binding methyltransferase superfamily. Cation-independent O-methyltransferase family. COMT subfamily. Homodimer. Fruit. Not expressed in leaf.

It catalyses the reaction (E)-caffeate + S-adenosyl-L-methionine = (E)-ferulate + S-adenosyl-L-homocysteine + H(+). It participates in aromatic compound metabolism; phenylpropanoid biosynthesis. Catalyzes the conversion of caffeic acid to ferulic acid and of 5-hydroxyferulic acid to sinapic acid. The resulting products may subsequently be converted to the corresponding alcohols that are incorporated into lignins. The chain is Caffeic acid 3-O-methyltransferase (COMT) from Capsicum annuum (Capsicum pepper).